The chain runs to 206 residues: Transcription antitermination protein NusB (206 aa).

The interval 135–206 (ARGEKTSAQE…ETQPPGVNEV (72 aa)) is disordered. Residues 169 to 180 (ATPATTPVTTTV) show a composition bias toward low complexity.

This sequence belongs to the NusB family.

In terms of biological role, involved in transcription antitermination. Required for transcription of ribosomal RNA (rRNA) genes. Binds specifically to the boxA antiterminator sequence of the ribosomal RNA (rrn) operons. This Heliobacterium modesticaldum (strain ATCC 51547 / Ice1) protein is Transcription antitermination protein NusB.